Here is a 459-residue protein sequence, read N- to C-terminus: tRNA modification GTPase MnmE (459 aa).

Residues Arg29, Glu86, and Lys125 each contribute to the (6S)-5-formyl-5,6,7,8-tetrahydrofolate site. Positions 221–382 (GMNVVIAGRP…LTEHLKAVMG (162 aa)) constitute a TrmE-type G domain. Asn231 provides a ligand contact to K(+). GTP contacts are provided by residues 231 to 236 (NAGKSS), 250 to 256 (TNIEGTT), and 275 to 278 (DTAG). Mg(2+) is bound at residue Ser235. Residues Thr250, Ile252, and Thr255 each coordinate K(+). Mg(2+) is bound at residue Thr256. Residue Lys459 participates in (6S)-5-formyl-5,6,7,8-tetrahydrofolate binding.

It belongs to the TRAFAC class TrmE-Era-EngA-EngB-Septin-like GTPase superfamily. TrmE GTPase family. As to quaternary structure, homodimer. Heterotetramer of two MnmE and two MnmG subunits. It depends on K(+) as a cofactor.

It is found in the cytoplasm. Functionally, exhibits a very high intrinsic GTPase hydrolysis rate. Involved in the addition of a carboxymethylaminomethyl (cmnm) group at the wobble position (U34) of certain tRNAs, forming tRNA-cmnm(5)s(2)U34. This chain is tRNA modification GTPase MnmE, found in Marinomonas sp. (strain MWYL1).